The chain runs to 124 residues: Small ribosomal subunit protein bS6 (124 aa).

Residues 96–124 (ETGPSPMMKEVQREEAKKAAAAQPTEAQA) form a disordered region. Residues 114–124 (AAAAQPTEAQA) show a composition bias toward low complexity.

This sequence belongs to the bacterial ribosomal protein bS6 family.

In terms of biological role, binds together with bS18 to 16S ribosomal RNA. The polypeptide is Small ribosomal subunit protein bS6 (Burkholderia lata (strain ATCC 17760 / DSM 23089 / LMG 22485 / NCIMB 9086 / R18194 / 383)).